The chain runs to 521 residues: Cholesterol side-chain cleavage enzyme, mitochondrial (521 aa).

The N-terminal 39 residues, 1–39, are a transit peptide targeting the mitochondrion; it reads MLAKGLPPRSVLVKGCQTFLSAPREGLGRLRVPTGEGAG. Cys-462 is a heme binding site.

Belongs to the cytochrome P450 family. In terms of assembly, interacts with FDX1/adrenodoxin. It depends on heme as a cofactor.

It is found in the mitochondrion inner membrane. It catalyses the reaction 6 reduced [adrenodoxin] + cholesterol + 3 O2 + 6 H(+) = 4-methylpentanal + pregnenolone + 6 oxidized [adrenodoxin] + 4 H2O. It carries out the reaction 2 reduced [adrenodoxin] + cholesterol + O2 + 2 H(+) = (22R)-hydroxycholesterol + 2 oxidized [adrenodoxin] + H2O. The enzyme catalyses (22R)-hydroxycholesterol + 2 reduced [adrenodoxin] + O2 + 2 H(+) = (20R,22R)-20,22-dihydroxycholesterol + 2 oxidized [adrenodoxin] + H2O. The catalysed reaction is (20R,22R)-20,22-dihydroxycholesterol + 2 reduced [adrenodoxin] + O2 + 2 H(+) = 4-methylpentanal + pregnenolone + 2 oxidized [adrenodoxin] + 2 H2O. It functions in the pathway lipid metabolism; C21-steroid hormone metabolism. It participates in steroid metabolism; cholesterol metabolism. Its function is as follows. A cytochrome P450 monooxygenase that catalyzes the side-chain hydroxylation and cleavage of cholesterol to pregnenolone, the precursor of most steroid hormones. Catalyzes three sequential oxidation reactions of cholesterol, namely the hydroxylation at C22 followed with the hydroxylation at C20 to yield 20R,22R-hydroxycholesterol that is further cleaved between C20 and C22 to yield the C21-steroid pregnenolone and 4-methylpentanal. Mechanistically, uses molecular oxygen inserting one oxygen atom into a substrate and reducing the second into a water molecule. Two electrons are provided by NADPH via a two-protein mitochondrial transfer system comprising flavoprotein FDXR (adrenodoxin/ferredoxin reductase) and nonheme iron-sulfur protein FDX1 or FDX2 (adrenodoxin/ferredoxin). The chain is Cholesterol side-chain cleavage enzyme, mitochondrial from Homo sapiens (Human).